The primary structure comprises 194 residues: Recombination protein RecR (194 aa).

The segment at 55-70 (CRECGNLAEGELCPIC) adopts a C4-type zinc-finger fold. Residues 78 to 171 (SLLAVVESVA…RVTRPAYGLP (94 aa)) form the Toprim domain.

It belongs to the RecR family.

May play a role in DNA repair. It seems to be involved in an RecBC-independent recombinational process of DNA repair. It may act with RecF and RecO. The sequence is that of Recombination protein RecR from Thermus thermophilus (strain ATCC 27634 / DSM 579 / HB8).